Reading from the N-terminus, the 356-residue chain is Magnesium-protoporphyrin IX monomethyl ester [oxidative] cyclase (356 aa).

It belongs to the AcsF family. Fe cation serves as cofactor.

The enzyme catalyses Mg-protoporphyrin IX 13-monomethyl ester + 3 NADPH + 3 O2 + 2 H(+) = 3,8-divinyl protochlorophyllide a + 3 NADP(+) + 5 H2O. Its pathway is porphyrin-containing compound metabolism; chlorophyll biosynthesis (light-independent). Its function is as follows. Catalyzes the formation of the isocyclic ring in chlorophyll biosynthesis. Mediates the cyclase reaction, which results in the formation of divinylprotochlorophyllide (Pchlide) characteristic of all chlorophylls from magnesium-protoporphyrin IX 13-monomethyl ester (MgPMME). In Parasynechococcus marenigrum (strain WH8102), this protein is Magnesium-protoporphyrin IX monomethyl ester [oxidative] cyclase.